The sequence spans 305 residues: Probable cell division protein WhiA (305 aa).

The H-T-H motif DNA-binding region spans 269–302 (TIKELGELLDPPLGKSGVNHRLRKLVERSNDLKK).

It belongs to the WhiA family.

In terms of biological role, involved in cell division and chromosome segregation. The chain is Probable cell division protein WhiA from Lactococcus lactis subsp. cremoris (strain MG1363).